The sequence spans 270 residues: Putative pyruvate, phosphate dikinase regulatory protein 2 (270 aa).

Position 151 to 158 (151 to 158 (GVSRTSKT)) interacts with ADP.

Belongs to the pyruvate, phosphate/water dikinase regulatory protein family. PDRP subfamily.

The enzyme catalyses N(tele)-phospho-L-histidyl/L-threonyl-[pyruvate, phosphate dikinase] + ADP = N(tele)-phospho-L-histidyl/O-phospho-L-threonyl-[pyruvate, phosphate dikinase] + AMP + H(+). The catalysed reaction is N(tele)-phospho-L-histidyl/O-phospho-L-threonyl-[pyruvate, phosphate dikinase] + phosphate + H(+) = N(tele)-phospho-L-histidyl/L-threonyl-[pyruvate, phosphate dikinase] + diphosphate. Functionally, bifunctional serine/threonine kinase and phosphorylase involved in the regulation of the pyruvate, phosphate dikinase (PPDK) by catalyzing its phosphorylation/dephosphorylation. This chain is Putative pyruvate, phosphate dikinase regulatory protein 2, found in Listeria monocytogenes serotype 4b (strain F2365).